The following is a 111-amino-acid chain: Large ribosomal subunit protein uL22 (111 aa).

This sequence belongs to the universal ribosomal protein uL22 family. Part of the 50S ribosomal subunit.

Its function is as follows. This protein binds specifically to 23S rRNA; its binding is stimulated by other ribosomal proteins, e.g. L4, L17, and L20. It is important during the early stages of 50S assembly. It makes multiple contacts with different domains of the 23S rRNA in the assembled 50S subunit and ribosome. In terms of biological role, the globular domain of the protein is located near the polypeptide exit tunnel on the outside of the subunit, while an extended beta-hairpin is found that lines the wall of the exit tunnel in the center of the 70S ribosome. In Clostridium tetani (strain Massachusetts / E88), this protein is Large ribosomal subunit protein uL22.